The primary structure comprises 244 residues: Salivary antigen-5 (244 aa).

A signal peptide spans 1-23; that stretch reads MAKAHSSLVFCLLALALVRFAQA. The SCP domain occupies 46 to 202; sequence LDFHNKFREL…WYTGYLVCNY (157 aa). N-linked (GlcNAc...) asparagine glycosylation is found at N106 and N172.

It belongs to the CRISP family. Venom allergen 5-like subfamily. In terms of tissue distribution, salivary gland (at protein level).

Its subcellular location is the secreted. Its function is as follows. Inhibits host platelet aggregation induced by low doses of collagen. This is Salivary antigen-5 from Triatoma infestans (Assassin bug).